The chain runs to 192 residues: UPF0149 protein YE3397 (192 aa).

It belongs to the UPF0149 family.

The chain is UPF0149 protein YE3397 from Yersinia enterocolitica serotype O:8 / biotype 1B (strain NCTC 13174 / 8081).